The sequence spans 30 residues: Superoxide dismutase [Cu-Zn] 1 (30 aa).

The protein belongs to the Cu-Zn superoxide dismutase family. It depends on Cu cation as a cofactor. Zn(2+) is required as a cofactor. Expressed in fruits, leaves and pollen grains.

It localises to the cytoplasm. It is found in the endoplasmic reticulum. The catalysed reaction is 2 superoxide + 2 H(+) = H2O2 + O2. With respect to regulation, inhibited by KCN and H(2)O(2). Functionally, destroys radicals which are normally produced within the cells and which are toxic to biological systems. Probably involved in the protection against oxidative stress during pollen development. This is Superoxide dismutase [Cu-Zn] 1 from Olea europaea (Common olive).